The following is a 119-amino-acid chain: Large ribosomal subunit protein uL18 (119 aa).

The protein belongs to the universal ribosomal protein uL18 family. In terms of assembly, part of the 50S ribosomal subunit; part of the 5S rRNA/L5/L18/L25 subcomplex. Contacts the 5S and 23S rRNAs.

Its function is as follows. This is one of the proteins that bind and probably mediate the attachment of the 5S RNA into the large ribosomal subunit, where it forms part of the central protuberance. The sequence is that of Large ribosomal subunit protein uL18 from Helicobacter pylori (strain HPAG1).